A 926-amino-acid chain; its full sequence is Armadillo repeat-containing protein 5 (926 aa).

Residues Pro82–Gly104 are compositionally biased toward low complexity. Residues Pro82–Ser111 form a disordered region. ARM repeat units follow at residues Gly139–Met179, Pro181–Asp221, Pro223–Arg263, Arg267–Ala306, Gln307–Glu354, Ala355–Ala399, and Gly401–Thr440. Residue Ser337 is modified to Phosphoserine. The disordered stretch occupies residues Trp472–Trp516. The span at Glu484–Arg499 shows a compositional bias: polar residues. Positions Pro745–Ala813 constitute a BTB domain.

In terms of assembly, substrate-recognition component of the BCR(ARMC5) E3 ubiquitin ligase complex, at least composed of CUL3, ARMC5 and RBX1. In terms of processing, ubiquitinated by a BCR (BTB-CUL3-RBX1) E3 ubiquitin ligase complex, leading to its degradation. Deubiquitinated by USP7. As to expression, expression is high in the thymus, stomach, bone marrow and lymphatic tissues (including lymph nodes and intestinal wall). Also expressed in the adrenal gland, skin and in brain structures, with noticeable levels found in the cerebellum.

It is found in the nucleus. It localises to the chromosome. The protein resides in the cytoplasm. It functions in the pathway protein modification; protein ubiquitination. In terms of biological role, substrate-recognition component of a BCR (BTB-CUL3-RBX1) E3 ubiquitin ligase complex that terminates RNA polymerase II (Pol II) transcription in the promoter-proximal region of genes. The BCR(ARMC5) complex provides a quality checkpoint during transcription elongation by driving premature transcription termination of transcripts that are unfavorably configured for transcriptional elongation: the BCR(ARMC5) complex acts by mediating ubiquitination of Pol II subunit POLR2A phosphorylated at 'Ser-5' of the C-terminal domain (CTD), leading to POLR2A degradation. The BCR(ARMC5) complex acts in parallel of the integrator complex and is specific for RNA Pol II originating from the promoter-proximal zone: it does not ubiquitinate elongation-stalled RNA Pol II. The BCR(ARMC5) complex also acts as a regulator of fatty acid desaturation by mediating ubiquitination and degradation of SCAP-free SREBF1 and SREBF2. Involved in fetal development, T-cell function and adrenal gland growth homeostasis. Plays a role in steroidogenesis, modulates steroidogenic enzymes expression and cortisol production. This is Armadillo repeat-containing protein 5 from Mus musculus (Mouse).